Here is a 576-residue protein sequence, read N- to C-terminus: Vesicular glutamate transporter 1 (576 aa).

Topologically, residues 1–63 are cytoplasmic; that stretch reads MEFRKEEFKK…CTCFGLPRRY (63 aa). A helical membrane pass occupies residues 64 to 84; that stretch reads IIAIMSGLGFCISFGIRCNLG. The Vesicular portion of the chain corresponds to 85–116; it reads VAIVSMVNNNTVYKGNKLVIEQAQFNWDPETV. The N-linked (GlcNAc...) asparagine glycan is linked to Asn93. A helical membrane pass occupies residues 117-137; sequence GMIHGSFFWGYIVTQIPGGYI. Over 138-140 the chain is Cytoplasmic; it reads CQK. Residues 141 to 161 traverse the membrane as a helical segment; that stretch reads FAANRVFGFAIVATSTLNMLI. At 162-168 the chain is on the vesicular side; that stretch reads PSAARVH. A helical transmembrane segment spans residues 169 to 189; that stretch reads FACVICVRILQGLVEGVTYPA. At 190–208 the chain is on the cytoplasmic side; the sequence is CHGIWSKWAPPLERSRLAT. A helical transmembrane segment spans residues 209 to 229; that stretch reads TAFCGSYAGAVVAMPLAGVLV. Topologically, residues 230 to 236 are vesicular; it reads QYSGWSS. A helical transmembrane segment spans residues 237-257; it reads VFYVYGSFGITWYMFWILVSY. The Cytoplasmic portion of the chain corresponds to 258–297; it reads ESPAQHPTISEEERKYIEESIGESTGFMNPMAKFKAPWRK. A helical membrane pass occupies residues 298–320; that stretch reads FFTSMPVYAIIVANFCRSWTFYL. Residues 321–341 lie on the Vesicular side of the membrane; sequence LLISQPAYFEEVFGFAISKVG. Residues 342-362 traverse the membrane as a helical segment; that stretch reads LLSALPHLVMTIIVPIGGQIA. Over 363–378 the chain is Cytoplasmic; sequence DFLRTKRIMSTTNVRK. The helical transmembrane segment at 379 to 399 threads the bilayer; the sequence is MMNCGGFGMEATLLLVVGYSH. Topologically, residues 400 to 401 are vesicular; the sequence is SR. A helical transmembrane segment spans residues 402–422; it reads GVAISFLVLAVGFSGFAISGF. Topologically, residues 423-435 are cytoplasmic; sequence NVNHLDIAPRYAS. The helical transmembrane segment at 436-456 threads the bilayer; the sequence is ILMGISNGVGTLSGMVCPLIV. The Vesicular portion of the chain corresponds to 457–469; the sequence is GAMTKHKTREEWQ. Residues 470–490 form a helical membrane-spanning segment; that stretch reads YVFLIASLVHYGGVVFYGIFA. Over 491-576 the chain is Cytoplasmic; that stretch reads SGEKQPWAEP…YGTVAERDLS (86 aa). Residues 517–552 form a disordered region; the sequence is ADESEEQTQAHGGYGSYGATQTTSQQNGGWATDWEK. A compositionally biased stretch (polar residues) spans 534–545; it reads GATQTTSQQNGG.

Belongs to the major facilitator superfamily. Sodium/anion cotransporter family. VGLUT subfamily.

It is found in the cytoplasmic vesicle. It localises to the secretory vesicle. The protein resides in the synaptic vesicle membrane. The protein localises to the cell membrane. Its subcellular location is the synapse. It is found in the synaptosome. The enzyme catalyses L-glutamate(out) = L-glutamate(in). It carries out the reaction chloride(in) = chloride(out). The catalysed reaction is 3 Na(+)(out) + phosphate(out) = 3 Na(+)(in) + phosphate(in). It catalyses the reaction phosphate(in) = phosphate(out). The enzyme catalyses K(+)(in) + H(+)(out) = K(+)(out) + H(+)(in). With respect to regulation, chloride channel activity is allosterically activated by lumenal H(+) and Cl(-) leading to synaptic vesicles acidification. The L-glutamate transport activity is allosterically activated by lumenal H(+) and Cl(-). The allosteric activation by H(+) efficiently prevents non-vesicular efflux across the plasma membrane, thereby restricting L-glutamate transport activity to acidic membranes such as synaptic vesicles. In terms of biological role, multifunctional transporter that transports L-glutamate as well as multiple ions such as chloride, proton, potassium, sodium and phosphate. At the synaptic vesicle membrane, mainly functions as an uniporter which transports preferentially L-glutamate but also phosphate from the cytoplasm into synaptic vesicles at presynaptic nerve terminals of excitatory neural cells. The L-glutamate or phosphate uniporter activity is electrogenic and is driven by the proton electrochemical gradient, mainly by the electrical gradient established by the vacuolar H(+)-ATPase across the synaptic vesicle membrane. In addition, functions as a chloride channel that allows a chloride permeation through the synaptic vesicle membrane that affects the proton electrochemical gradient and promotes synaptic vesicles acidification. Moreover, may function as a K(+)/H(+) antiport allowing to maintain the electrical gradient and to decrease chemical gradient and therefore sustain vesicular glutamate uptake. The vesicular K(+)/H(+) antiport activity is electroneutral. At the plasma membrane, following exocytosis, functions as a symporter of Na(+) and phosphate from the extracellular space to the cytoplasm allowing synaptic phosphate homeostasis regulation. The symporter activity is driven by an inside negative membrane potential and is electrogenic. Is necessary for synaptic signaling of visual-evoked responses from photoreceptors. The chain is Vesicular glutamate transporter 1 from Xenopus laevis (African clawed frog).